Here is a 465-residue protein sequence, read N- to C-terminus: Alpha-2A adrenergic receptor (465 aa).

The Extracellular portion of the chain corresponds to 1-48 (MFRQEQPLAEGSFAPMGSLQPDAGNASWNGTEAPGGGARATPYSLQVT). N-linked (GlcNAc...) asparagine glycans are attached at residues Asn25 and Asn29. A helical transmembrane segment spans residues 49–74 (LTLVCLAGLLMLLTVFGNVLVIIAVF). The Cytoplasmic segment spans residues 75–85 (TSRALKAPQNL). The chain crosses the membrane as a helical span at residues 86-111 (FLVSLASADILVATLVIPFSLANEVM). Over 112–121 (GYWYFGKAWC) the chain is Extracellular. A disulfide bridge connects residues Cys121 and Cys203. Residues 122-144 (EIYLALDVLFCTSSIVHLCAISL) traverse the membrane as a helical segment. At 145-166 (DRYWSITQAIEYNLKRTPRRIK) the chain is on the cytoplasmic side. A helical membrane pass occupies residues 167–187 (AIIITVWVISAVISFPPLISI). At 188 to 209 (EKKGGGGGPQPAEPRCEINDQK) the chain is on the extracellular side. A helical membrane pass occupies residues 210–232 (WYVISSCIGSFFAPCLIMILVYV). Residues 233–389 (RIYQIAKRRT…RQNREKRFTF (157 aa)) lie on the Cytoplasmic side of the membrane. Residues 242-368 (TRVPPSRRGP…TPAAGPGEER (127 aa)) form a disordered region. Positions 313 to 330 (SSDHAERPPGPRRPERGP) are enriched in basic and acidic residues. The residue at position 346 (Ser346) is a Phosphoserine. Arg368 carries the omega-N-methylarginine modification. A helical membrane pass occupies residues 390–410 (VLAVVIGVFVVCWFPFFFTYT). Residues 411 to 424 (LTAVGCSVPRTLFK) lie on the Extracellular side of the membrane. A helical transmembrane segment spans residues 425–444 (FFFWFGYCNSSLNPVIYTIF). The Cytoplasmic segment spans residues 445 to 465 (NHDFRRAFKKILCRGDRKRIV). The S-palmitoyl cysteine moiety is linked to residue Cys457.

This sequence belongs to the G-protein coupled receptor 1 family. Adrenergic receptor subfamily. ADRA2A sub-subfamily.

It localises to the cell membrane. Alpha-2 adrenergic receptors mediate the catecholamine-induced inhibition of adenylate cyclase through the action of G proteins. The rank order of potency for agonists of this receptor is oxymetazoline &gt; clonidine &gt; epinephrine &gt; norepinephrine &gt; phenylephrine &gt; dopamine &gt; p-synephrine &gt; p-tyramine &gt; serotonin = p-octopamine. For antagonists, the rank order is yohimbine &gt; phentolamine = mianserine &gt; chlorpromazine = spiperone = prazosin &gt; propanolol &gt; alprenolol = pindolol. The sequence is that of Alpha-2A adrenergic receptor from Homo sapiens (Human).